Consider the following 223-residue polypeptide: Large ribosomal subunit protein uL3 (223 aa).

The protein belongs to the universal ribosomal protein uL3 family. Part of the 50S ribosomal subunit. Forms a cluster with proteins L14 and L19.

One of the primary rRNA binding proteins, it binds directly near the 3'-end of the 23S rRNA, where it nucleates assembly of the 50S subunit. The sequence is that of Large ribosomal subunit protein uL3 from Nocardioides sp. (strain ATCC BAA-499 / JS614).